The chain runs to 158 residues: Transcription elongation factor GreA (158 aa).

It belongs to the GreA/GreB family.

In terms of biological role, necessary for efficient RNA polymerase transcription elongation past template-encoded arresting sites. The arresting sites in DNA have the property of trapping a certain fraction of elongating RNA polymerases that pass through, resulting in locked ternary complexes. Cleavage of the nascent transcript by cleavage factors such as GreA or GreB allows the resumption of elongation from the new 3'terminus. GreA releases sequences of 2 to 3 nucleotides. The sequence is that of Transcription elongation factor GreA from Ruthia magnifica subsp. Calyptogena magnifica.